Consider the following 548-residue polypeptide: Chaperonin GroEL (548 aa).

ATP is bound by residues 30–33, lysine 51, 87–91, glycine 415, 479–481, and aspartate 495; these read TLGP, DGTTT, and NAA. The interval 524–548 is disordered; the sequence is LPKEDKSSDSSSSPAGGMGGMGGMM. Positions 539–548 are enriched in gly residues; sequence GGMGGMGGMM.

The protein belongs to the chaperonin (HSP60) family. Forms a cylinder of 14 subunits composed of two heptameric rings stacked back-to-back. Interacts with the co-chaperonin GroES.

The protein resides in the cytoplasm. The enzyme catalyses ATP + H2O + a folded polypeptide = ADP + phosphate + an unfolded polypeptide.. Together with its co-chaperonin GroES, plays an essential role in assisting protein folding. The GroEL-GroES system forms a nano-cage that allows encapsulation of the non-native substrate proteins and provides a physical environment optimized to promote and accelerate protein folding. In Buchnera aphidicola subsp. Acyrthosiphon pisum (strain Tuc7), this protein is Chaperonin GroEL.